The sequence spans 360 residues: Photosystem II protein D1 (360 aa).

The next 3 helical transmembrane spans lie at 29 to 46 (YIGWFGVLMIPCLLTATT), 118 to 133 (HFLLGVAAYMGREWEL), and 142 to 156 (WICVAFSAPVAAATA). H118 provides a ligand contact to chlorophyll a. Y126 lines the pheophytin a pocket. Residues D170 and E189 each contribute to the [CaMn4O5] cluster site. Residues 197–218 (FHMAGVAGVFGGALFSAMHGSL) traverse the membrane as a helical segment. Chlorophyll a is bound at residue H198. Residues H215 and 264-265 (SF) each bind a quinone. H215 contacts Fe cation. H272 lines the Fe cation pocket. A helical membrane pass occupies residues 274–288 (FLGLWPVVGIWLTSI). Residues H332, E333, D342, and A344 each contribute to the [CaMn4O5] cluster site. Positions 345-360 (DNSLLPVASSSPSINS) are excised as a propeptide.

The protein belongs to the reaction center PufL/M/PsbA/D family. In terms of assembly, PSII is composed of 1 copy each of membrane proteins PsbA, PsbB, PsbC, PsbD, PsbE, PsbF, PsbH, PsbI, PsbJ, PsbK, PsbL, PsbM, PsbT, PsbY, PsbZ, Psb30/Ycf12, at least 3 peripheral proteins of the oxygen-evolving complex and a large number of cofactors. It forms dimeric complexes. Requires The D1/D2 heterodimer binds P680, chlorophylls that are the primary electron donor of PSII, and subsequent electron acceptors. It shares a non-heme iron and each subunit binds pheophytin, quinone, additional chlorophylls, carotenoids and lipids. D1 provides most of the ligands for the Mn4-Ca-O5 cluster of the oxygen-evolving complex (OEC). There is also a Cl(-1) ion associated with D1 and D2, which is required for oxygen evolution. The PSII complex binds additional chlorophylls, carotenoids and specific lipids. as cofactor. Post-translationally, tyr-161 forms a radical intermediate that is referred to as redox-active TyrZ, YZ or Y-Z.

It localises to the plastid. It is found in the chloroplast thylakoid membrane. The enzyme catalyses 2 a plastoquinone + 4 hnu + 2 H2O = 2 a plastoquinol + O2. Photosystem II (PSII) is a light-driven water:plastoquinone oxidoreductase that uses light energy to abstract electrons from H(2)O, generating O(2) and a proton gradient subsequently used for ATP formation. It consists of a core antenna complex that captures photons, and an electron transfer chain that converts photonic excitation into a charge separation. The D1/D2 (PsbA/PsbD) reaction center heterodimer binds P680, the primary electron donor of PSII as well as several subsequent electron acceptors. In Cyanidium caldarium (Red alga), this protein is Photosystem II protein D1.